Here is a 1008-residue protein sequence, read N- to C-terminus: Pheromone-regulated membrane protein 10 (1008 aa).

Disordered stretches follow at residues 1–273 (MSQS…TFLG), 342–384 (KLPE…FYTP), and 477–506 (KNDF…TQDE). Residues 70–85 (DTIISNASTTNNSSSD) are compositionally biased toward low complexity. The segment covering 95-111 (GENSNLPNFNFSANQVH) has biased composition (polar residues). Composition is skewed to acidic residues over residues 116–132 (ANED…EDTF) and 143–161 (GSDE…EDKE). Over residues 162 to 186 (EVVNEKEEIADDLHSKSSKTSRESK) the composition is skewed to basic and acidic residues. Positions 188-204 (FNAGTKNSRRSLNSLQR) are enriched in polar residues. Residues 205-214 (NETDVTDQLK) are compositionally biased toward basic and acidic residues. The segment covering 215–225 (RTTSTTSSSKR) has biased composition (low complexity). Residues 226–239 (SNSDKRTGFKDILR) show a composition bias toward basic and acidic residues. Positions 346–364 (GTSSDQQLDYSDTSASNLI) are enriched in polar residues. The span at 483–498 (GPKRMANKIPGRKHGA) shows a compositional bias: basic residues. Transmembrane regions (helical) follow at residues 683 to 703 (SPWL…PFAF), 707 to 727 (WYDV…QFFV), 736 to 756 (SVFE…IGSI), 762 to 782 (FCFS…YIIL), 800 to 820 (MFYA…GASL), 838 to 858 (IKQD…LGLI), 866 to 886 (LPIM…AGKH), 892 to 912 (VTEF…NLYS), 917 to 937 (GMAV…GIAS), and 978 to 998 (VKVS…VYPF).

Belongs to the ThrE exporter (TC 2.A.79) family.

It is found in the membrane. In Debaryomyces hansenii (strain ATCC 36239 / CBS 767 / BCRC 21394 / JCM 1990 / NBRC 0083 / IGC 2968) (Yeast), this protein is Pheromone-regulated membrane protein 10.